Reading from the N-terminus, the 204-residue chain is Ribosome maturation factor RimP (204 aa).

Positions 176–204 (GNFDESQFDEIEESEGEEADEAEQPPTKH) are disordered. Residues 181–198 (SQFDEIEESEGEEADEAE) show a composition bias toward acidic residues.

This sequence belongs to the RimP family.

The protein localises to the cytoplasm. Required for maturation of 30S ribosomal subunits. The protein is Ribosome maturation factor RimP of Cereibacter sphaeroides (strain KD131 / KCTC 12085) (Rhodobacter sphaeroides).